Consider the following 303-residue polypeptide: N-acetyl-D-glucosamine kinase (303 aa).

ATP is bound by residues 4–11 (GFDIGGTK) and 133–140 (GVGGGLIF). Histidine 157, cysteine 177, cysteine 179, and cysteine 184 together coordinate Zn(2+).

Belongs to the ROK (NagC/XylR) family. NagK subfamily.

The enzyme catalyses N-acetyl-D-glucosamine + ATP = N-acetyl-D-glucosamine 6-phosphate + ADP + H(+). Its pathway is cell wall biogenesis; peptidoglycan recycling. Catalyzes the phosphorylation of N-acetyl-D-glucosamine (GlcNAc) derived from cell-wall degradation, yielding GlcNAc-6-P. In Shigella sonnei (strain Ss046), this protein is N-acetyl-D-glucosamine kinase.